Consider the following 225-residue polypeptide: Fibroblast growth factor 11 (225 aa).

The disordered stretch occupies residues 1-28 (MAALASSLIRQKREVREPGGSRPVSAQR).

The protein belongs to the heparin-binding growth factors family. In terms of tissue distribution, brain and eye, and in a segmental pattern of the embryonic body wall. In adult olfactory bulb, hippocampus and most concentrated in Purkinje cell layer of the cerebellum.

Its subcellular location is the nucleus. Functionally, probably involved in nervous system development and function. The protein is Fibroblast growth factor 11 (Fgf11) of Mus musculus (Mouse).